A 375-amino-acid chain; its full sequence is Tryptophan--tRNA ligase (375 aa).

Residues 81–89 carry the 'HIGH' region motif; that stretch reads PSGPVHIGH. The 'KMSKS' region signature appears at 258–262; that stretch reads KMSAS.

The protein belongs to the class-I aminoacyl-tRNA synthetase family.

The protein resides in the cytoplasm. The enzyme catalyses tRNA(Trp) + L-tryptophan + ATP = L-tryptophyl-tRNA(Trp) + AMP + diphosphate + H(+). In Pyrobaculum aerophilum (strain ATCC 51768 / DSM 7523 / JCM 9630 / CIP 104966 / NBRC 100827 / IM2), this protein is Tryptophan--tRNA ligase.